The sequence spans 943 residues: Lysine-specific demethylase JMJ21 (943 aa).

An F-box domain is found at 14–60 (LGSLSVLPDETICVLLEYLAPRDIAHLACVSSVMYILCNEEPLWMSL). Residues 216-379 (EAAPELLKDY…FVCLDMAPGY (164 aa)) enclose the JmjC domain. Residues His-262, Asp-264, and His-347 each coordinate Fe cation. Positions 396–410 (NSEDLEEETHDEEDN) are enriched in acidic residues. The interval 396 to 438 (NSEDLEEETHDEEDNTLSYSDLTRKEKRTRMNGGGETENREED) is disordered.

It belongs to the JARID1 histone demethylase family. The cofactor is Fe(2+). As to expression, mostly expressed in leaves, and, to a lower extent, in inflorescences, roots, siliques and stems.

It localises to the nucleus. Functionally, may function as histone H3 lysine demethylase and be involved in regulation of gene expression. The polypeptide is Lysine-specific demethylase JMJ21 (Arabidopsis thaliana (Mouse-ear cress)).